The primary structure comprises 308 residues: CMP-N-acetylneuraminate:beta-galactoside alpha-2,3-sialyltransferase (308 aa).

The active-site Proton acceptor is the aspartate 201. Residues 221–225 (LPHPR), 242–243 (FE), and 262–263 (SS) each bind CMP-N-acetyl-beta-neuraminate. Histidine 223 acts as the Proton donor in catalysis.

It belongs to the glycosyltransferase 52 family. Requires Divalent metal cations are not required for the alpha-2,3-sialyltransferase activity. as cofactor.

Functionally, catalyzes the transfer of sialic acid from the substrate CMP-N-acetylneuraminate to lactosyl lipids as preferred acceptor substrates in vitro, forming alpha-2,3-linked sialosides. Beta-1,4-linked galactosyl lipids are better substrates than beta-1,3-linked galactosyl lipids. The natural acceptor substrate may be cell surface oligosaccharides in lipooligosaccharide (LOS), whose sialylation has been demonstrated vital for the virulence of P.multocida. This is CMP-N-acetylneuraminate:beta-galactoside alpha-2,3-sialyltransferase (lst) from Pasteurella multocida (strain Pm70).